The sequence spans 471 residues: BRISC complex subunit FAM175B (471 aa).

In terms of domain architecture, MPN spans 7–161; the sequence is LVTISGAALS…THKFRHVFLR (155 aa). Positions 245–272 form a coiled coil; that stretch reads ESDLEVAELEKQVHELKIKIATQQLAKR. The segment at 343 to 445 is disordered; sequence AEKSRRAGRS…FSDAECPISS (103 aa). The segment covering 359–370 has biased composition (low complexity); the sequence is NQQQETQNFFTN.

The protein belongs to the FAM175 family. Abro1 subfamily. As to quaternary structure, component of the BRISC complex, at least composed of FAM175B/ABRO1, BRCC3/BRCC36, BABAM2 and BABAM1/NBA1. Within the complex, interacts directly with BRCC3/BRCC36. The heterodimer with BRCC3/BRCC36 assembles into a heterotetramer. The BRISC complex binds polyubiquitin.

The protein localises to the cytoplasm. Its subcellular location is the nucleus. It is found in the cytoskeleton. The protein resides in the spindle pole. Component of the BRISC complex that specifically cleaves 'Lys-63'-linked polyubiquitin, leaving the last ubiquitin chain attached to its substrates. Does not have activity by itself, but the catalytic subunit BRCC3/BRCC36 needs to be associated into a heterotetramer with FAM175B for minimal in vitro activity. May act as a central scaffold protein that assembles the various components of the BRISC complex and retains them in the cytoplasm. Plays a role in regulating the onset of apoptosis via its role in modulating 'Lys-63'-linked ubiquitination of target proteins. Required for normal mitotic spindle assembly and microtubule attachment to kinetochores via its role in deubiquitinating numa1. This is BRISC complex subunit FAM175B from Camponotus floridanus (Florida carpenter ant).